A 581-amino-acid chain; its full sequence is Probable hexosyltransferase MUCI70 (581 aa).

Residues 1–58 (MTGLGVRSSSYGSLEKTGLNGVVLPIQITTTTRTKPSKMQKDREGIVHWICKFAGRKK) are Cytoplasmic-facing. Residues 59 to 79 (VGMLLLFLISAVVFLRVLYVG) traverse the membrane as a helical; Signal-anchor for type II membrane protein segment. The Lumenal segment spans residues 80–581 (KGEDSQEGQG…NLPVRLPDSA (502 aa)). N-linked (GlcNAc...) asparagine glycosylation is found at asparagine 96, asparagine 102, asparagine 119, asparagine 194, asparagine 224, asparagine 285, asparagine 382, asparagine 411, and asparagine 488. Residues 514–581 (RFARQRPPVP…NLPVRLPDSA (68 aa)) form a disordered region. Positions 520-536 (PPVPNFPPPPPSPPPPV) are enriched in pro residues. Over residues 553–571 (PPRRRGRDRRSGQRGHRKA) the composition is skewed to basic residues.

The protein belongs to the glycosyltransferase 8 family. As to expression, expressed in siliques and seeds.

It is found in the golgi apparatus membrane. It functions in the pathway glycan metabolism; pectin biosynthesis. Functionally, probable glycosyltransferase involved in pectin and/or xylans biosynthesis in cell walls. Together with IRX14, required for xylan and pectin synthesis in seed coat epidermal (SCE) cells. Collaboratively with GAUT11, essential for the accumulation of seed mucilage, a gelatinous wall rich in unbranched rhamnogalacturonan I (RG I), and for shaping the surface morphology of seeds. The sequence is that of Probable hexosyltransferase MUCI70 from Arabidopsis thaliana (Mouse-ear cress).